The following is a 507-amino-acid chain: Probable cyclic di-GMP phosphodiesterase PdeG (507 aa).

A run of 2 helical transmembrane segments spans residues 4–24 (TLIPILVAICLFITGVAILNI) and 217–237 (LIDKGFGILIFILLIACAAAF). Positions 246–500 (SATPEEILRR…DLVKIILSKP (255 aa)) constitute an EAL domain.

It localises to the cell membrane. The enzyme catalyses 3',3'-c-di-GMP + H2O = 5'-phosphoguanylyl(3'-&gt;5')guanosine + H(+). Phosphodiesterase (PDE) that catalyzes the hydrolysis of cyclic-di-GMP (c-di-GMP) to 5'-pGpG. In Escherichia coli (strain K12), this protein is Probable cyclic di-GMP phosphodiesterase PdeG.